We begin with the raw amino-acid sequence, 438 residues long: Histidinol dehydrogenase (438 aa).

Residues Tyr-138, Gln-199, and Asn-222 each coordinate NAD(+). Positions 245, 267, and 270 each coordinate substrate. Zn(2+) is bound by residues Gln-267 and His-270. Residues Glu-335 and His-336 each act as proton acceptor in the active site. Residues His-336, Asp-369, Glu-423, and His-428 each coordinate substrate. Asp-369 serves as a coordination point for Zn(2+). Position 428 (His-428) interacts with Zn(2+).

The protein belongs to the histidinol dehydrogenase family. Zn(2+) is required as a cofactor.

The catalysed reaction is L-histidinol + 2 NAD(+) + H2O = L-histidine + 2 NADH + 3 H(+). The protein operates within amino-acid biosynthesis; L-histidine biosynthesis; L-histidine from 5-phospho-alpha-D-ribose 1-diphosphate: step 9/9. Functionally, catalyzes the sequential NAD-dependent oxidations of L-histidinol to L-histidinaldehyde and then to L-histidine. This Burkholderia lata (strain ATCC 17760 / DSM 23089 / LMG 22485 / NCIMB 9086 / R18194 / 383) protein is Histidinol dehydrogenase.